The primary structure comprises 428 residues: Dihydroorotase (428 aa).

2 residues coordinate Zn(2+): H59 and H61. Residues 61–63 and N93 contribute to the substrate site; that span reads HLR. Positions 151, 178, and 231 each coordinate Zn(2+). N277 provides a ligand contact to substrate. D304 provides a ligand contact to Zn(2+). D304 is a catalytic residue. Residues H308 and 322 to 323 each bind substrate; that span reads FG.

The protein belongs to the metallo-dependent hydrolases superfamily. DHOase family. Class I DHOase subfamily. It depends on Zn(2+) as a cofactor.

It catalyses the reaction (S)-dihydroorotate + H2O = N-carbamoyl-L-aspartate + H(+). It functions in the pathway pyrimidine metabolism; UMP biosynthesis via de novo pathway; (S)-dihydroorotate from bicarbonate: step 3/3. In terms of biological role, catalyzes the reversible cyclization of carbamoyl aspartate to dihydroorotate. The chain is Dihydroorotase from Bacillus cytotoxicus (strain DSM 22905 / CIP 110041 / 391-98 / NVH 391-98).